We begin with the raw amino-acid sequence, 105 residues long: Large ribosomal subunit protein bL21 (105 aa).

This sequence belongs to the bacterial ribosomal protein bL21 family. As to quaternary structure, part of the 50S ribosomal subunit. Contacts protein L20.

In terms of biological role, this protein binds to 23S rRNA in the presence of protein L20. The protein is Large ribosomal subunit protein bL21 of Rhizobium johnstonii (strain DSM 114642 / LMG 32736 / 3841) (Rhizobium leguminosarum bv. viciae).